The sequence spans 391 residues: Pectate lyase D (391 aa).

An N-terminal signal peptide occupies residues Met1–Ala31. Residues Asp170 and Asp213 each contribute to the Ca(2+) site. Arg266 is a catalytic residue.

It belongs to the polysaccharide lyase 1 family. PLBC subfamily. Requires Ca(2+) as cofactor.

The protein localises to the secreted. The enzyme catalyses Eliminative cleavage of (1-&gt;4)-alpha-D-galacturonan to give oligosaccharides with 4-deoxy-alpha-D-galact-4-enuronosyl groups at their non-reducing ends.. It functions in the pathway glycan metabolism; pectin degradation; 2-dehydro-3-deoxy-D-gluconate from pectin: step 2/5. In terms of biological role, involved in maceration and soft-rotting of plant tissue. The sequence is that of Pectate lyase D (pelD) from Dickeya chrysanthemi (Pectobacterium chrysanthemi).